A 205-amino-acid polypeptide reads, in one-letter code: Small ribosomal subunit protein uS4c (205 aa).

The interval 22–42 is disordered; sequence TSKISKKTNTPGEHGQPQNKL. A compositionally biased stretch (polar residues) spans 28–42; sequence KTNTPGEHGQPQNKL. Residues 94-157 form the S4 RNA-binding domain; that stretch reads MRLDNIVYRL…ASRDLVKKFV (64 aa).

The protein belongs to the universal ribosomal protein uS4 family. As to quaternary structure, part of the 30S ribosomal subunit. Contacts protein S5. The interaction surface between S4 and S5 is involved in control of translational fidelity.

It localises to the plastid. The protein resides in the chloroplast. Functionally, one of the primary rRNA binding proteins, it binds directly to 16S rRNA where it nucleates assembly of the body of the 30S subunit. Its function is as follows. With S5 and S12 plays an important role in translational accuracy. The chain is Small ribosomal subunit protein uS4c (rps4) from Tupiella akineta (Green alga).